We begin with the raw amino-acid sequence, 521 residues long: Probable methylmalonate-semialdehyde/malonate-semialdehyde dehydrogenase [acylating], mitochondrial (521 aa).

NAD(+)-binding residues include Phe172, Lys196, Glu199, Arg200, and Ser249. Cys304 (nucleophile) is an active-site residue. NAD(+) is bound at residue Glu404.

It belongs to the aldehyde dehydrogenase family. As to quaternary structure, homotetramer.

It localises to the mitochondrion. It catalyses the reaction 2-methyl-3-oxopropanoate + NAD(+) + CoA + H2O = propanoyl-CoA + hydrogencarbonate + NADH + H(+). It carries out the reaction 3-oxopropanoate + NAD(+) + CoA + H2O = hydrogencarbonate + acetyl-CoA + NADH + H(+). Functionally, probable malonate and methylmalonate semialdehyde dehydrogenase involved in the catabolism of valine, thymine, and compounds catabolized by way of beta-alanine, including uracil and cytidine. This Aedes aegypti (Yellowfever mosquito) protein is Probable methylmalonate-semialdehyde/malonate-semialdehyde dehydrogenase [acylating], mitochondrial.